The primary structure comprises 474 residues: tRNA-2-methylthio-N(6)-dimethylallyladenosine synthase (474 aa).

An MTTase N-terminal domain is found at Lys3–Ser120. Positions 12, 49, 83, 157, 161, and 164 each coordinate [4Fe-4S] cluster. A Radical SAM core domain is found at Arg143–Arg375. The region spanning Arg378–Arg441 is the TRAM domain.

It belongs to the methylthiotransferase family. MiaB subfamily. As to quaternary structure, monomer. [4Fe-4S] cluster is required as a cofactor.

The protein localises to the cytoplasm. It carries out the reaction N(6)-dimethylallyladenosine(37) in tRNA + (sulfur carrier)-SH + AH2 + 2 S-adenosyl-L-methionine = 2-methylsulfanyl-N(6)-dimethylallyladenosine(37) in tRNA + (sulfur carrier)-H + 5'-deoxyadenosine + L-methionine + A + S-adenosyl-L-homocysteine + 2 H(+). Its function is as follows. Catalyzes the methylthiolation of N6-(dimethylallyl)adenosine (i(6)A), leading to the formation of 2-methylthio-N6-(dimethylallyl)adenosine (ms(2)i(6)A) at position 37 in tRNAs that read codons beginning with uridine. The protein is tRNA-2-methylthio-N(6)-dimethylallyladenosine synthase of Vibrio vulnificus (strain YJ016).